Consider the following 107-residue polypeptide: Large ribosomal subunit protein uL24 (107 aa).

The protein belongs to the universal ribosomal protein uL24 family. As to quaternary structure, part of the 50S ribosomal subunit.

Its function is as follows. One of two assembly initiator proteins, it binds directly to the 5'-end of the 23S rRNA, where it nucleates assembly of the 50S subunit. Functionally, one of the proteins that surrounds the polypeptide exit tunnel on the outside of the subunit. The polypeptide is Large ribosomal subunit protein uL24 (Mycobacterium ulcerans (strain Agy99)).